We begin with the raw amino-acid sequence, 103 residues long: Large ribosomal subunit protein bL21 (103 aa).

This sequence belongs to the bacterial ribosomal protein bL21 family. Part of the 50S ribosomal subunit. Contacts protein L20.

Functionally, this protein binds to 23S rRNA in the presence of protein L20. This Pectobacterium carotovorum subsp. carotovorum (strain PC1) protein is Large ribosomal subunit protein bL21.